The following is a 455-amino-acid chain: Phosphoglucosamine mutase (455 aa).

Serine 108 functions as the Phosphoserine intermediate in the catalytic mechanism. Mg(2+)-binding residues include serine 108, aspartate 248, aspartate 250, and aspartate 252. At serine 108 the chain carries Phosphoserine.

This sequence belongs to the phosphohexose mutase family. Requires Mg(2+) as cofactor. Activated by phosphorylation.

It catalyses the reaction alpha-D-glucosamine 1-phosphate = D-glucosamine 6-phosphate. Functionally, catalyzes the conversion of glucosamine-6-phosphate to glucosamine-1-phosphate. The polypeptide is Phosphoglucosamine mutase (Leuconostoc mesenteroides subsp. mesenteroides (strain ATCC 8293 / DSM 20343 / BCRC 11652 / CCM 1803 / JCM 6124 / NCDO 523 / NBRC 100496 / NCIMB 8023 / NCTC 12954 / NRRL B-1118 / 37Y)).